The chain runs to 273 residues: Dermonecrotic toxin LhSicTox-alphaIA2bvi (273 aa).

His5 is an active-site residue. Mg(2+) contacts are provided by Glu25 and Asp27. His41 functions as the Nucleophile in the catalytic mechanism. 2 disulfide bridges follow: Cys45/Cys51 and Cys47/Cys190. A Mg(2+)-binding site is contributed by Asp85.

The protein belongs to the arthropod phospholipase D family. Class II subfamily. Mg(2+) serves as cofactor. In terms of tissue distribution, expressed by the venom gland.

The protein localises to the secreted. It catalyses the reaction an N-(acyl)-sphingosylphosphocholine = an N-(acyl)-sphingosyl-1,3-cyclic phosphate + choline. It carries out the reaction an N-(acyl)-sphingosylphosphoethanolamine = an N-(acyl)-sphingosyl-1,3-cyclic phosphate + ethanolamine. The catalysed reaction is a 1-acyl-sn-glycero-3-phosphocholine = a 1-acyl-sn-glycero-2,3-cyclic phosphate + choline. The enzyme catalyses a 1-acyl-sn-glycero-3-phosphoethanolamine = a 1-acyl-sn-glycero-2,3-cyclic phosphate + ethanolamine. Dermonecrotic toxins cleave the phosphodiester linkage between the phosphate and headgroup of certain phospholipids (sphingolipid and lysolipid substrates), forming an alcohol (often choline) and a cyclic phosphate. This toxin acts on sphingomyelin (SM). It may also act on ceramide phosphoethanolamine (CPE), lysophosphatidylcholine (LPC) and lysophosphatidylethanolamine (LPE), but not on lysophosphatidylserine (LPS), and lysophosphatidylglycerol (LPG). It acts by transphosphatidylation, releasing exclusively cyclic phosphate products as second products. Induces dermonecrosis, hemolysis, increased vascular permeability, edema, inflammatory response, and platelet aggregation. The sequence is that of Dermonecrotic toxin LhSicTox-alphaIA2bvi from Loxosceles hirsuta (Recluse spider).